The following is a 217-amino-acid chain: 3,4-dihydroxy-2-butanone 4-phosphate synthase (217 aa).

Residues 37–38 (RE), Asp-42, 150–154 (RGGHT), and Glu-174 contribute to the D-ribulose 5-phosphate site. Mg(2+) is bound at residue Glu-38. His-153 contacts Mg(2+).

This sequence belongs to the DHBP synthase family. Homodimer. Mg(2+) is required as a cofactor. It depends on Mn(2+) as a cofactor.

The enzyme catalyses D-ribulose 5-phosphate = (2S)-2-hydroxy-3-oxobutyl phosphate + formate + H(+). Its pathway is cofactor biosynthesis; riboflavin biosynthesis; 2-hydroxy-3-oxobutyl phosphate from D-ribulose 5-phosphate: step 1/1. Its function is as follows. Catalyzes the conversion of D-ribulose 5-phosphate to formate and 3,4-dihydroxy-2-butanone 4-phosphate. This Shigella boydii serotype 18 (strain CDC 3083-94 / BS512) protein is 3,4-dihydroxy-2-butanone 4-phosphate synthase.